The sequence spans 461 residues: Cysteine--tRNA ligase (461 aa).

Cys28 is a binding site for Zn(2+). Positions 30–40 (ITVYDLCHIGH) match the 'HIGH' region motif. Cys209, His234, and Glu238 together coordinate Zn(2+). The short motif at 266-270 (KMSKS) is the 'KMSKS' region element. Lys269 lines the ATP pocket.

This sequence belongs to the class-I aminoacyl-tRNA synthetase family. Monomer. Requires Zn(2+) as cofactor.

It is found in the cytoplasm. It carries out the reaction tRNA(Cys) + L-cysteine + ATP = L-cysteinyl-tRNA(Cys) + AMP + diphosphate. The sequence is that of Cysteine--tRNA ligase from Cronobacter sakazakii (strain ATCC BAA-894) (Enterobacter sakazakii).